We begin with the raw amino-acid sequence, 137 residues long: Nucleoside diphosphate kinase (137 aa).

ATP is bound by residues Lys9, Phe57, Arg85, Thr91, Arg102, and Asn112. His115 functions as the Pros-phosphohistidine intermediate in the catalytic mechanism.

This sequence belongs to the NDK family. Homotetramer. It depends on Mg(2+) as a cofactor.

It is found in the cytoplasm. The enzyme catalyses a 2'-deoxyribonucleoside 5'-diphosphate + ATP = a 2'-deoxyribonucleoside 5'-triphosphate + ADP. The catalysed reaction is a ribonucleoside 5'-diphosphate + ATP = a ribonucleoside 5'-triphosphate + ADP. In terms of biological role, major role in the synthesis of nucleoside triphosphates other than ATP. The ATP gamma phosphate is transferred to the NDP beta phosphate via a ping-pong mechanism, using a phosphorylated active-site intermediate. This Geobacter sulfurreducens (strain ATCC 51573 / DSM 12127 / PCA) protein is Nucleoside diphosphate kinase.